Consider the following 420-residue polypeptide: Serine/threonine-protein kinase PCRK2 (420 aa).

Positions 1–64 (MKCFLFPLGD…SNTSMSAREN (64 aa)) are disordered. The span at 22 to 36 (SPTSNFSDVNKSGSD) shows a compositional bias: polar residues. The span at 42-58 (VSGTSTVSSTGRNSNTS) shows a compositional bias: low complexity. At Thr70 the chain carries Phosphothreonine. A Protein kinase domain is found at 81–366 (FSRSGMIGEG…EVLEMVTKIV (286 aa)). ATP contacts are provided by residues 87-95 (IGEGGFGCV) and Lys115. At Tyr164 the chain carries Phosphotyrosine. Asp215 acts as the Proton acceptor in catalysis. Phosphoserine occurs at positions 219 and 249. Phosphothreonine occurs at positions 250 and 255. Tyr263 carries the post-translational modification Phosphotyrosine. The segment at 369–396 (SSPGNGGKKPQLVPLKSQETSRVEEGKN) is disordered. A compositionally biased stretch (basic and acidic residues) spans 387-396 (ETSRVEEGKN).

Belongs to the protein kinase superfamily. Ser/Thr protein kinase family. Interacts with FLS2.

The protein resides in the cell membrane. The catalysed reaction is L-seryl-[protein] + ATP = O-phospho-L-seryl-[protein] + ADP + H(+). The enzyme catalyses L-threonyl-[protein] + ATP = O-phospho-L-threonyl-[protein] + ADP + H(+). Functionally, functions redundantly with PCRK1 in basal resistance against bacterial pathogens and in regulation of plant immunity. Functions together with PCRK1 downstream of the pathogen-associated molecular pattern (PAMP) receptor FLS2. Contributes to the induction of SARD1 and CBP60G, which are transcriptional activator of ICS1, an enzyme involved in salicylate (SA) biosynthesis upon pathogen attack. This chain is Serine/threonine-protein kinase PCRK2, found in Arabidopsis thaliana (Mouse-ear cress).